Consider the following 78-residue polypeptide: MGGISIWQLLIVALIVVLLFGTKKLRSLGGDLGGAVKGFKSAMSSEEEKKAIEDSASEKTAQTEEKKTESKDKDKEQV.

The chain crosses the membrane as a helical span at residues 1–21; the sequence is MGGISIWQLLIVALIVVLLFG. The tract at residues 40-78 is disordered; it reads KSAMSSEEEKKAIEDSASEKTAQTEEKKTESKDKDKEQV. A compositionally biased stretch (basic and acidic residues) spans 46-78; it reads EEEKKAIEDSASEKTAQTEEKKTESKDKDKEQV.

This sequence belongs to the TatA/E family. In terms of assembly, the Tat system comprises two distinct complexes: a TatABC complex, containing multiple copies of TatA, TatB and TatC subunits, and a separate TatA complex, containing only TatA subunits. Substrates initially bind to the TatABC complex, which probably triggers association of the separate TatA complex to form the active translocon.

The protein resides in the cell inner membrane. In terms of biological role, part of the twin-arginine translocation (Tat) system that transports large folded proteins containing a characteristic twin-arginine motif in their signal peptide across membranes. TatA could form the protein-conducting channel of the Tat system. In Shewanella sediminis (strain HAW-EB3), this protein is Sec-independent protein translocase protein TatA.